The sequence spans 360 residues: Phenylalanine--tRNA ligase alpha subunit (360 aa).

Glu-260 is a Mg(2+) binding site.

It belongs to the class-II aminoacyl-tRNA synthetase family. Phe-tRNA synthetase alpha subunit type 1 subfamily. Tetramer of two alpha and two beta subunits. Requires Mg(2+) as cofactor.

It localises to the cytoplasm. It catalyses the reaction tRNA(Phe) + L-phenylalanine + ATP = L-phenylalanyl-tRNA(Phe) + AMP + diphosphate + H(+). The sequence is that of Phenylalanine--tRNA ligase alpha subunit from Paracoccus denitrificans (strain Pd 1222).